We begin with the raw amino-acid sequence, 320 residues long: 4-diphosphocytidyl-2-C-methyl-D-erythritol kinase (320 aa).

K20 is an active-site residue. 112–122 (PVAGGMGGGSA) serves as a coordination point for ATP. D154 is a catalytic residue.

Belongs to the GHMP kinase family. IspE subfamily.

The catalysed reaction is 4-CDP-2-C-methyl-D-erythritol + ATP = 4-CDP-2-C-methyl-D-erythritol 2-phosphate + ADP + H(+). It participates in isoprenoid biosynthesis; isopentenyl diphosphate biosynthesis via DXP pathway; isopentenyl diphosphate from 1-deoxy-D-xylulose 5-phosphate: step 3/6. Catalyzes the phosphorylation of the position 2 hydroxy group of 4-diphosphocytidyl-2C-methyl-D-erythritol. The polypeptide is 4-diphosphocytidyl-2-C-methyl-D-erythritol kinase (Arthrobacter sp. (strain FB24)).